A 722-amino-acid polypeptide reads, in one-letter code: Serine/threonine-protein kinase dkf-1 (722 aa).

2 Phorbol-ester/DAG-type zinc fingers span residues proline 98–cysteine 148 and proline 186–cysteine 236. The PH domain occupies lysine 279–proline 407. The 260-residue stretch at valine 426–leucine 685 folds into the Protein kinase domain. ATP-binding positions include leucine 432 to valine 440 and lysine 455. Aspartate 551 serves as the catalytic Proton acceptor. Threonine 588 carries the post-translational modification Phosphothreonine.

This sequence belongs to the protein kinase superfamily. CAMK Ser/Thr protein kinase family. PKD subfamily. The cofactor is Mg(2+). In terms of processing, prolonged phosphorylation at Thr-588 results in ubiquitination and degradation. In terms of tissue distribution, highly expressed in embryos and at lower levels through the four larval stages in adults. Present in a region bounded by the anterior and posterior bulbs of the pharynx and an area of the tail containing the lumbar, dorsorectal and pre-anal ganglia. Expressed in neurons.

It localises to the cytoplasm. The protein resides in the membrane. It carries out the reaction L-seryl-[protein] + ATP = O-phospho-L-seryl-[protein] + ADP + H(+). The catalysed reaction is L-threonyl-[protein] + ATP = O-phospho-L-threonyl-[protein] + ADP + H(+). With respect to regulation, activated by DAG and phorbol esters. Phorbol-ester/DAG-type domain 1 binds phorbol ester with high affinity and mediates accumulation at the cell periphery. Phorbol-ester/DAG-type domain 2 binds phorbol ester with low affinity but may mediate initial contact, resulting in a conformational change allowing previously occluded domain 1 to anchor the kinase. Phosphorylation on Thr-588 is then also required for activation and may also result in a further conformational change. Converts transient diacylglycerol (DAG) signals into prolonged physiological effects, independently of PKC. Role in the regulation of growth and neuromuscular control of movement. Involved in immune response to S.aureus bacterium by activating transcription factor hlh-30 downstream of phospholipase plc-1. The chain is Serine/threonine-protein kinase dkf-1 (dkf-1) from Caenorhabditis elegans.